Consider the following 324-residue polypeptide: tRNA uridine(34) hydroxylase (324 aa).

One can recognise a Rhodanese domain in the interval 145–239 (NDKKTIFIDM…YVHDARKNGL (95 aa)). Cys199 (cysteine persulfide intermediate) is an active-site residue.

Belongs to the TrhO family.

The enzyme catalyses uridine(34) in tRNA + AH2 + O2 = 5-hydroxyuridine(34) in tRNA + A + H2O. Catalyzes oxygen-dependent 5-hydroxyuridine (ho5U) modification at position 34 in tRNAs. The chain is tRNA uridine(34) hydroxylase from Buchnera aphidicola subsp. Acyrthosiphon pisum (strain APS) (Acyrthosiphon pisum symbiotic bacterium).